Consider the following 251-residue polypeptide: Ubiquinone/menaquinone biosynthesis C-methyltransferase UbiE (251 aa).

S-adenosyl-L-methionine-binding positions include Thr-74, Asp-95, 123-124, and Ser-140; that span reads NA.

Belongs to the class I-like SAM-binding methyltransferase superfamily. MenG/UbiE family.

It catalyses the reaction a 2-demethylmenaquinol + S-adenosyl-L-methionine = a menaquinol + S-adenosyl-L-homocysteine + H(+). It carries out the reaction a 2-methoxy-6-(all-trans-polyprenyl)benzene-1,4-diol + S-adenosyl-L-methionine = a 5-methoxy-2-methyl-3-(all-trans-polyprenyl)benzene-1,4-diol + S-adenosyl-L-homocysteine + H(+). It functions in the pathway quinol/quinone metabolism; menaquinone biosynthesis; menaquinol from 1,4-dihydroxy-2-naphthoate: step 2/2. The protein operates within cofactor biosynthesis; ubiquinone biosynthesis. In terms of biological role, methyltransferase required for the conversion of demethylmenaquinol (DMKH2) to menaquinol (MKH2) and the conversion of 2-polyprenyl-6-methoxy-1,4-benzoquinol (DDMQH2) to 2-polyprenyl-3-methyl-6-methoxy-1,4-benzoquinol (DMQH2). The chain is Ubiquinone/menaquinone biosynthesis C-methyltransferase UbiE from Citrobacter koseri (strain ATCC BAA-895 / CDC 4225-83 / SGSC4696).